Here is a 310-residue protein sequence, read N- to C-terminus: GMP synthase [glutamine-hydrolyzing] subunit B (310 aa).

A GMPS ATP-PPase domain is found at 1-187 (MSTSSYIDQI…LGLRTDLQPF (187 aa)). Residue 27–33 (SGGQDSS) coordinates ATP.

In terms of assembly, heterodimer composed of a glutamine amidotransferase subunit (A) and a GMP-binding subunit (B).

It carries out the reaction XMP + L-glutamine + ATP + H2O = GMP + L-glutamate + AMP + diphosphate + 2 H(+). The protein operates within purine metabolism; GMP biosynthesis; GMP from XMP (L-Gln route): step 1/1. Functionally, catalyzes the synthesis of GMP from XMP. This Thermoplasma acidophilum (strain ATCC 25905 / DSM 1728 / JCM 9062 / NBRC 15155 / AMRC-C165) protein is GMP synthase [glutamine-hydrolyzing] subunit B (guaAB).